A 159-amino-acid polypeptide reads, in one-letter code: Large ribosomal subunit protein eL29 (159 aa).

The segment covering 1 to 26 (MAKSKNHTTHNQSRKWHRNGIKKPRS) has biased composition (basic residues). Residues 1–32 (MAKSKNHTTHNQSRKWHRNGIKKPRSQRYESL) are disordered. Lys-5 carries the post-translational modification N6-methyllysine. Phosphoserine is present on Ser-31. Lys-33 bears the N6-acetyllysine mark. Over residues 117 to 127 (RLCRPKAKAKA) the composition is skewed to basic residues. The segment at 117–159 (RLCRPKAKAKAKAKDQTKAQAAAPASVPAQAPKRTQAPTKASE) is disordered. Positions 134-149 (KAQAAAPASVPAQAPK) are enriched in low complexity. Position 142 is a phosphoserine (Ser-142).

The protein belongs to the eukaryotic ribosomal protein eL29 family. In terms of assembly, component of the large ribosomal subunit.

Its subcellular location is the cytoplasm. Component of the large ribosomal subunit. The ribosome is a large ribonucleoprotein complex responsible for the synthesis of proteins in the cell. This is Large ribosomal subunit protein eL29 (RPL29) from Homo sapiens (Human).